A 347-amino-acid polypeptide reads, in one-letter code: Heat-inducible transcription repressor HrcA (347 aa).

The protein belongs to the HrcA family.

Functionally, negative regulator of class I heat shock genes (grpE-dnaK-dnaJ and groELS operons). Prevents heat-shock induction of these operons. In Lactococcus lactis subsp. cremoris (strain MG1363), this protein is Heat-inducible transcription repressor HrcA.